The following is a 271-amino-acid chain: METLTVHAPSPSTNLPSYGNGAFSLSAPHVPGAGPLLVQVVYSFFQSPNMCLQALTQLEDYIKKHGASNPLTLQIISTNIGYFCNADRNLVLHPGISVYDAYHFAKPAPSQYDYRSMNMKQMSGNVTTPIVALAHYLWGNGAERSVNIANIGLKISPMKINQIKDIIKSGVVGTFPVSTKFTHATGDYNVITGAYLGNITLKTEGTLTISANGSWTYNGVVRSYDDKYDFNASTHRGIIGESLTRLGAMFSGKEYQILLPGEIHIKESGKR.

Residues 2-9 (ETLTVHAP) carry the TonB box motif.

Its function is as follows. Colicins are polypeptide toxins produced by and active against E.coli and closely related bacteria. This is a calcium-requiring inhibitor for murein biosynthesis; it causes lysis of sensitive cells accompanied by murein degradation. The target site is possibly the cytoplasmic membrane. In Escherichia coli, this protein is Colicin-M (cma).